The chain runs to 98 residues: RING finger protein Z (98 aa).

Basic and acidic residues predominate over residues 1–10 (MGNTKTKDRQ). Positions 1-26 (MGNTKTKDRQYQSNSSQPTNTSAPVL) are disordered. Gly2 is lipidated: N-myristoyl glycine; by host. Residues 11–23 (YQSNSSQPTNTSA) are compositionally biased toward polar residues. The segment at 41–77 (CRCCWFADTNLVNCSNHYLCLKCLNTMLRRSNLCDIC) adopts an RING-type; atypical zinc-finger fold. The PTAP/PSAP motif motif lies at 91–94 (PSAP).

The protein belongs to the arenaviridae Z protein family. As to quaternary structure, interacts with protein NP; this interaction probably directs the encapsidated genome to budding sites. Interacts (via RING domain) with polymerase L; this interaction inhibits viral transcription and replication, Z partially blocks the product exit tunnel for the releasing nascent RNA product. Interacts with the glycoprotein complex; this interaction plays a role in virion budding. Interacts with host eIF4E; this interaction results in eIF4E reduced affinity for its substrate, the 5'-m7 G cap structure. Interacts (via late-budding domain) with host TSG101; this interaction is essential for budding and release of viral particles. Interacts with host RPLP0; this interaction may serve to load ribosome-like particles inside the virion. Interacts with host PML; this interaction induces PML bodies redistribution in the cytoplasm upon viral infection. In terms of processing, myristoylation is required for the role of RING finger protein Z in assembly and budding.

The protein resides in the virion. It localises to the host cytoplasm. Its subcellular location is the host perinuclear region. It is found in the host cell membrane. In terms of biological role, plays a crucial role in virion assembly and budding. Expressed late in the virus life cycle, it acts as an inhibitor of viral transcription and RNA synthesis by interacting with the viral polymerase L. Presumably recruits the NP encapsidated genome to cellular membranes at budding sites via direct interaction with NP. Plays critical roles in the final steps of viral release by interacting with host TSG101, a member of the vacuolar protein-sorting pathway and using other cellular host proteins involved in vesicle formation pathway. The budding of the virus progeny occurs after association of protein Z with the viral glycoprotein complex SSP-GP1-GP2 at the cell periphery, step that requires myristoylation of protein Z. Also selectively represses protein production by associating with host eIF4E. In cell-based minigenome assay, has an inhibitory effect on the ribonucleoprotein machinery (vRNP), which is responsible for the replication and transcription of the viral genome. The chain is RING finger protein Z from Chapare mammarenavirus (isolate Human/Bolivia/810419/2003).